Here is a 671-residue protein sequence, read N- to C-terminus: MFLLPFVIRHSSSIYLPTLRFRGLLTVISRNIHISTPHKMLPLSIEQRRPSRSPEYDQSTLSNYKDFAVLHTDLNLSVSFEKSAISGSVTFQLKKLHEGKNKSDELHLDTSYLDVQEVHIDGSKADFQIEQRKEPLGSRLVINNASCNDNFTLNIQFRTTDKCTALQWLNSKQTKGGKPYVFSQLEAIHARSLFPCFDTPSVKSTFTASIESPLPVVFSGIRIEDTSKDTNIYRFEQKVPIPAYLIGIASGDLSSAPIGPRSTVYTEPFRLKDCQWEFENDVEKFIQTAEKIIFEYEWGTYDILVNVDSYPYGGMESPNMTFATPTLIAHDRSNIDVIAHELAHSWSGNLVTNCSWNHFWLNEGWTVYLERRIIGAIHGEPTRHFSALIGWSDLQNSIDSMKDPERFSTLVQNLNDNTDPDDAFSTVPYEKGFNLLFHLETILGGKAEFDPFIRHYFKKFAKKSLDTFQFLDTLYEFYPEKKEILDSVDWETWLYKPGMPPRPHFITALADNVYQLADKWVEMAQHLKTTEDFRSEFNAIDIKDFNSNQLVLFLETLTQNGHSNKKPKDFDWAKFPVASRALLDIYQDNIVKSQNAEVVFKMFKFQIFAKLQEEYKHLADWLGTVGRMKFVRPGYRLLNSVDRRLALATFDKFKDTYHPICKALVKQDLGL.

Residues 184 to 186 (QLE) and 311 to 316 (PYGGME) each bind substrate. Zn(2+) is bound at residue His340. The active-site Proton acceptor is the Glu341. Zn(2+) contacts are provided by His344 and Glu363. Tyr429 acts as the Proton donor in catalysis.

Belongs to the peptidase M1 family. Zn(2+) serves as cofactor.

It is found in the cytoplasm. It localises to the nucleus. It carries out the reaction an epoxide + H2O = an ethanediol. Inhibited by 3-(4-benzyloxyphenyl)-2-(R)-amino-1-propanethiol (thioamine) and N-hydroxy-N-(2-(S)-amino-3-(4-benzyloxyphenyl)propyl)-5-carboxypen-tanamide (hydroxamic acid). The aminopeptidase activity is stimulated by LTA(4). In terms of biological role, aminopeptidase that preferentially cleaves di- and tripeptides. Also has low epoxide hydrolase activity (in vitro). Can hydrolyze the epoxide leukotriene LTA(4) but it forms preferentially 5,6-dihydroxy-7,9,11,14-eicosatetraenoic acid rather than the cytokine leukotriene B(4) as the product compared to the homologous mammalian enzyme (in vitro). The sequence is that of Leucine aminopeptidase 2 from Saccharomyces cerevisiae (strain YJM789) (Baker's yeast).